We begin with the raw amino-acid sequence, 215 residues long: Putative BTB/POZ domain-containing protein At2g05330 (215 aa).

Residues 17-87 enclose the BTB domain; the sequence is SWQKIGKLTY…LYSDGSMLSS (71 aa).

The protein operates within protein modification; protein ubiquitination. May act as a substrate-specific adapter of an E3 ubiquitin-protein ligase complex (CUL3-RBX1-BTB) which mediates the ubiquitination and subsequent proteasomal degradation of target proteins. The sequence is that of Putative BTB/POZ domain-containing protein At2g05330 from Arabidopsis thaliana (Mouse-ear cress).